A 435-amino-acid polypeptide reads, in one-letter code: Tol-Pal system protein TolB (435 aa).

A signal peptide spans 1–26 (MKIFSPIRLVLAIAALMSVFSAPAFA).

The protein belongs to the TolB family. As to quaternary structure, the Tol-Pal system is composed of five core proteins: the inner membrane proteins TolA, TolQ and TolR, the periplasmic protein TolB and the outer membrane protein Pal. They form a network linking the inner and outer membranes and the peptidoglycan layer.

It localises to the periplasm. Its function is as follows. Part of the Tol-Pal system, which plays a role in outer membrane invagination during cell division and is important for maintaining outer membrane integrity. The chain is Tol-Pal system protein TolB from Agrobacterium fabrum (strain C58 / ATCC 33970) (Agrobacterium tumefaciens (strain C58)).